Consider the following 310-residue polypeptide: Prephenate dehydratase (310 aa).

Positions 3-190 (RIAYLGPEGT…ARTRFVLVGL (188 aa)) constitute a Prephenate dehydratase domain. The ACT domain maps to 204–281 (AVVLRLVNEP…VDVRYLGSWP (78 aa)).

Homodimer.

It catalyses the reaction prephenate + H(+) = 3-phenylpyruvate + CO2 + H2O. The protein operates within amino-acid biosynthesis; L-phenylalanine biosynthesis; phenylpyruvate from prephenate: step 1/1. The chain is Prephenate dehydratase (pheA) from Mycolicibacterium smegmatis (strain ATCC 700084 / mc(2)155) (Mycobacterium smegmatis).